A 358-amino-acid polypeptide reads, in one-letter code: Homoserine O-acetyltransferase (358 aa).

Positions 41 to 343 (NAVLICHALT…DYGHDAFLVD (303 aa)) constitute an AB hydrolase-1 domain. Ser143 (nucleophile) is an active-site residue. Substrate is bound at residue Arg212. Catalysis depends on residues Asp304 and His337. Asp338 serves as a coordination point for substrate.

As to quaternary structure, homodimer.

It localises to the cytoplasm. The catalysed reaction is L-homoserine + acetyl-CoA = O-acetyl-L-homoserine + CoA. The protein operates within amino-acid biosynthesis; L-methionine biosynthesis via de novo pathway; O-acetyl-L-homoserine from L-homoserine: step 1/1. Its function is as follows. Transfers an acetyl group from acetyl-CoA to L-homoserine, forming acetyl-L-homoserine. Utilizes a ping-pong kinetic mechanism in which the acetyl group of acetyl-CoA is initially transferred to the enzyme to form an acetyl-enzyme intermediate before subsequent transfer to homoserine to form the final product, O-acetylhomoserine. The polypeptide is Homoserine O-acetyltransferase (Haemophilus influenzae (strain ATCC 51907 / DSM 11121 / KW20 / Rd)).